A 456-amino-acid polypeptide reads, in one-letter code: MALPVVAIIGRPNVGKSTLVNRLCQSREAIVHDEPGVTRDRTYQDGFWRDRDFKVVDTGGLVFDDDSEFLPEIREQANLALEEAVVALVIVDGQEGITTADESIAEFLRSRSCKTLVVVNKCESPEQGLAMAAEFWKLGLGEPYPISAIHGVGTGDLLDQVVNLFPSKDLDEVSDSPVQLAIIGRPNVGKSSLLNSICGETRAIVSSIRGTTRDTIDTRITHQGKEWKLVDTAGIRRRRSVNYGPEFFGINRSFKAIERSDVCVLVIDALDGVTEQDQRLAGRIEQEGRACLIVINKWDAVEKDSHTMSAMEKDIRSKLYFLDWAQMIFTSAVTGQRVEGIFALATLAVDQSRRRVTTSVVNEVLTEALKWRSPPTTRGGKQGRLYYGTQVAINPPSFTLFVNEPKLFGETYRRYIERQIREGLGFEGTPIKLFWRGKQQRDVEKDMARQQKGVQN.

2 consecutive EngA-type G domains span residues 4-169 and 178-353; these read PVVA…PSKD and VQLA…DQSR. Residues 10–17, 57–61, 120–123, 184–191, 231–235, and 296–299 each bind GTP; these read GRPNVGKS, DTGGL, NKCE, DTAGI, and NKWD. Residues 354–439 form the KH-like domain; it reads RRVTTSVVNE…PIKLFWRGKQ (86 aa).

It belongs to the TRAFAC class TrmE-Era-EngA-EngB-Septin-like GTPase superfamily. EngA (Der) GTPase family. In terms of assembly, associates with the 50S ribosomal subunit.

Functionally, GTPase that plays an essential role in the late steps of ribosome biogenesis. The polypeptide is GTPase Der (Prochlorococcus marinus (strain NATL1A)).